We begin with the raw amino-acid sequence, 280 residues long: H-2 class II histocompatibility antigen gamma chain (280 aa).

The Cytoplasmic portion of the chain corresponds to Met1 to Arg30. Residue Ser9 is modified to Phosphoserine. A helical; Signal-anchor for type II membrane protein transmembrane segment spans residues Gly31–Tyr56. Topologically, residues Gln57–Leu280 are extracellular. 2 N-linked (GlcNAc...) asparagine glycosylation sites follow: Asn114 and Asn120. Positions Leu194–Cys255 constitute a Thyroglobulin type-1 domain. 3 cysteine pairs are disulfide-bonded: Cys197–Cys216, Cys227–Cys234, and Cys236–Cys255. Residues His246–Leu268 are disordered. The O-linked (Xyl...) (chondroitin sulfate) serine glycan is linked to Ser266.

Nonamer composed of three alpha/beta/gamma heterotrimers. Interacts with CD44; this complex is essential for the MIF-induced signaling cascade that results in B cell survival. As to quaternary structure, interacts with the mature form of CTSL; the complex survive in neutral pH environment.

Its subcellular location is the late endosome. The protein resides in the lysosome. It localises to the cell membrane. It is found in the endoplasmic reticulum membrane. The protein localises to the golgi apparatus. Its subcellular location is the trans-Golgi network. The protein resides in the endosome. It localises to the secreted. In terms of biological role, plays a critical role in MHC class II antigen processing by stabilizing peptide-free class II alpha/beta heterodimers in a complex soon after their synthesis and directing transport of the complex from the endoplasmic reticulum to compartments where peptide loading of class II takes place. Enhance also the stimulation of T-cell responses through interaction with CD44. Its function is as follows. Binds to the peptide-binding site of MHC class II alpha/beta heterodimers forming an alpha-beta-CLIP complex, thereby preventing the loading of antigenic peptides to the MHC class II complex until its release by HLA-DM in the endosome. Stabilizes the conformation of mature CTSL by binding to its active site and serving as a chaperone to help maintain a pool of mature enzyme in endocytic compartments and extracellular space of antigen-presenting cells (APCs). This chain is H-2 class II histocompatibility antigen gamma chain, found in Rattus norvegicus (Rat).